The primary structure comprises 339 residues: Glycerol-3-phosphate dehydrogenase [NAD(P)+] (339 aa).

The NADPH site is built by Ser15, Trp16, His36, and Lys110. Residues Lys110, Gly144, and Ser146 each coordinate sn-glycerol 3-phosphate. NADPH is bound at residue Ala148. 5 residues coordinate sn-glycerol 3-phosphate: Lys199, Asp252, Ser262, Arg263, and Asn264. Lys199 serves as the catalytic Proton acceptor. Residue Arg263 participates in NADPH binding. 2 residues coordinate NADPH: Val287 and Glu289.

It belongs to the NAD-dependent glycerol-3-phosphate dehydrogenase family.

Its subcellular location is the cytoplasm. The catalysed reaction is sn-glycerol 3-phosphate + NAD(+) = dihydroxyacetone phosphate + NADH + H(+). It carries out the reaction sn-glycerol 3-phosphate + NADP(+) = dihydroxyacetone phosphate + NADPH + H(+). Its pathway is membrane lipid metabolism; glycerophospholipid metabolism. In terms of biological role, catalyzes the reduction of the glycolytic intermediate dihydroxyacetone phosphate (DHAP) to sn-glycerol 3-phosphate (G3P), the key precursor for phospholipid synthesis. This is Glycerol-3-phosphate dehydrogenase [NAD(P)+] from Desulfotalea psychrophila (strain LSv54 / DSM 12343).